Reading from the N-terminus, the 445-residue chain is tRNA modification GTPase MnmE (445 aa).

(6S)-5-formyl-5,6,7,8-tetrahydrofolate is bound by residues R25, E83, and K121. The TrmE-type G domain occupies 217–371 (GVRVVILGPP…LLTLIQEKSR (155 aa)). Residues 227–232 (NAGKST), 246–252 (SEHPGTT), and 271–274 (DTAG) contribute to the GTP site. Mg(2+) contacts are provided by S231 and T252. K445 serves as a coordination point for (6S)-5-formyl-5,6,7,8-tetrahydrofolate.

This sequence belongs to the TRAFAC class TrmE-Era-EngA-EngB-Septin-like GTPase superfamily. TrmE GTPase family. Homodimer. Heterotetramer of two MnmE and two MnmG subunits. It depends on K(+) as a cofactor.

The protein resides in the cytoplasm. Functionally, exhibits a very high intrinsic GTPase hydrolysis rate. Involved in the addition of a carboxymethylaminomethyl (cmnm) group at the wobble position (U34) of certain tRNAs, forming tRNA-cmnm(5)s(2)U34. The polypeptide is tRNA modification GTPase MnmE (Anaplasma phagocytophilum (strain HZ)).